A 262-amino-acid chain; its full sequence is Type III pantothenate kinase (262 aa).

An ATP-binding site is contributed by 6-13 (DVGNTNAV). Residues tyrosine 100 and 107 to 110 (GADR) each bind substrate. The active-site Proton acceptor is aspartate 109. Aspartate 129 provides a ligand contact to K(+). Threonine 132 is an ATP binding site. Threonine 184 contacts substrate.

This sequence belongs to the type III pantothenate kinase family. Homodimer. Requires NH4(+) as cofactor. The cofactor is K(+).

The protein localises to the cytoplasm. The enzyme catalyses (R)-pantothenate + ATP = (R)-4'-phosphopantothenate + ADP + H(+). The protein operates within cofactor biosynthesis; coenzyme A biosynthesis; CoA from (R)-pantothenate: step 1/5. Functionally, catalyzes the phosphorylation of pantothenate (Pan), the first step in CoA biosynthesis. The polypeptide is Type III pantothenate kinase (Bacillus anthracis (strain A0248)).